The chain runs to 198 residues: 8-oxoguanine DNA glycosylase/AP lyase (198 aa).

Active-site residues include K122 and D140.

It belongs to the type-2 OGG1 family. Monomer.

It carries out the reaction 2'-deoxyribonucleotide-(2'-deoxyribose 5'-phosphate)-2'-deoxyribonucleotide-DNA = a 3'-end 2'-deoxyribonucleotide-(2,3-dehydro-2,3-deoxyribose 5'-phosphate)-DNA + a 5'-end 5'-phospho-2'-deoxyribonucleoside-DNA + H(+). Catalyzes the excision of an oxidatively damaged form of guanine (7,8-dihydro-8-oxoguanine = 8-oxoG) from DNA. Also cleaves the DNA backbone at apurinic/apyrimidinic sites (AP sites). Efficiently cleaves oligomers containing 8-oxoG:C and 8-oxoG:G base pairs, and is less effective on oligomers containing 8-oxoG:T and 8-oxoG:A mispairs. The sequence is that of 8-oxoguanine DNA glycosylase/AP lyase from Archaeoglobus fulgidus (strain ATCC 49558 / DSM 4304 / JCM 9628 / NBRC 100126 / VC-16).